The following is a 451-amino-acid chain: Probable carboxypeptidase PMAA_093910 (451 aa).

The signal sequence occupies residues 1–19 (MKVSSLLPSVLLLVGATRA). N-linked (GlcNAc...) asparagine glycosylation is present at N149. D171 contributes to the Zn(2+) binding site. Catalysis depends on E203, which acts as the Proton acceptor. Zn(2+) is bound at residue E204. Residue N354 is glycosylated (N-linked (GlcNAc...) asparagine).

It belongs to the peptidase M20A family. It depends on Zn(2+) as a cofactor.

Its subcellular location is the secreted. This chain is Probable carboxypeptidase PMAA_093910, found in Talaromyces marneffei (strain ATCC 18224 / CBS 334.59 / QM 7333) (Penicillium marneffei).